The following is a 570-amino-acid chain: Proline--tRNA ligase (570 aa).

It belongs to the class-II aminoacyl-tRNA synthetase family. ProS type 1 subfamily. As to quaternary structure, homodimer.

It is found in the cytoplasm. It catalyses the reaction tRNA(Pro) + L-proline + ATP = L-prolyl-tRNA(Pro) + AMP + diphosphate. In terms of biological role, catalyzes the attachment of proline to tRNA(Pro) in a two-step reaction: proline is first activated by ATP to form Pro-AMP and then transferred to the acceptor end of tRNA(Pro). As ProRS can inadvertently accommodate and process non-cognate amino acids such as alanine and cysteine, to avoid such errors it has two additional distinct editing activities against alanine. One activity is designated as 'pretransfer' editing and involves the tRNA(Pro)-independent hydrolysis of activated Ala-AMP. The other activity is designated 'posttransfer' editing and involves deacylation of mischarged Ala-tRNA(Pro). The misacylated Cys-tRNA(Pro) is not edited by ProRS. This chain is Proline--tRNA ligase, found in Clostridium acetobutylicum (strain ATCC 824 / DSM 792 / JCM 1419 / IAM 19013 / LMG 5710 / NBRC 13948 / NRRL B-527 / VKM B-1787 / 2291 / W).